Here is a 443-residue protein sequence, read N- to C-terminus: Xaa-Pro dipeptidase (443 aa).

5 residues coordinate Mn(2+): D246, D257, H339, E384, and E423.

This sequence belongs to the peptidase M24B family. Bacterial-type prolidase subfamily. Requires Mn(2+) as cofactor.

The enzyme catalyses Xaa-L-Pro dipeptide + H2O = an L-alpha-amino acid + L-proline. In terms of biological role, splits dipeptides with a prolyl residue in the C-terminal position. This chain is Xaa-Pro dipeptidase, found in Pectobacterium atrosepticum (strain SCRI 1043 / ATCC BAA-672) (Erwinia carotovora subsp. atroseptica).